The sequence spans 1021 residues: Probable calcium-transporting ATPase 6, plasma membrane-type (1021 aa).

Residues 1-155 (MEGGRSWSIE…RSFWMFVWDA (155 aa)) lie on the Cytoplasmic side of the membrane. A run of 2 helical transmembrane segments spans residues 156–176 (LHDLTLIILVVCALVSIVVGL) and 181–201 (WPMGIYDGFGIILSILLVVLV). Topologically, residues 202-241 (TATSDYQQARKFMELDREKQKIYIRVTRDKKTKEVLVHDL) are cytoplasmic. The next 2 helical transmembrane spans lie at 242 to 262 (VVGDILHLSIGDVVPADGLFI) and 338 to 358 (VATIIGQIGLVFAVLTFLVLL). Residues 359 to 384 (ARFLADKGMHVGLLNWSANDALTIVN) lie on the Cytoplasmic side of the membrane. Residues 385 to 405 (YFAIAVTIIVVAVPEGLPLAV) traverse the membrane as a helical segment. The active-site 4-aspartylphosphate intermediate is the Asp-441. Mg(2+) is bound by residues Asp-740 and Asp-744. A helical membrane pass occupies residues 807 to 827 (IVALIVNFVSACIIGSAPLTA). Residues 828-829 (VQ) lie on the Cytoplasmic side of the membrane. Helical transmembrane passes span 830–850 (LLWVNMIMDTLGALALATEPP) and 879–899 (GLYQLLVLATLMVIGKKLLSI). The Cytoplasmic portion of the chain corresponds to 900–942 (EGPQSDKTINTLIFNSFVFCQVFNEINCREMEKINVLQGIFRN). The next 2 helical transmembrane spans lie at 943–963 (WIFVGILTATVIFQVIIVEFL) and 974–994 (GELWLLSVVIGSISMIISVIL). At 995–1021 (KCIPVEFNKTNTKPHGYELIPEGPEIL) the chain is on the cytoplasmic side.

The protein belongs to the cation transport ATPase (P-type) (TC 3.A.3) family. Type IIB subfamily.

The protein localises to the membrane. It catalyses the reaction Ca(2+)(in) + ATP + H2O = Ca(2+)(out) + ADP + phosphate + H(+). Its activity is regulated as follows. Activated by calmodulin. Functionally, this magnesium-dependent enzyme catalyzes the hydrolysis of ATP coupled with the translocation of calcium from the cytosol out of the cell, into the endoplasmic reticulum, or into organelles. This is Probable calcium-transporting ATPase 6, plasma membrane-type from Oryza sativa subsp. japonica (Rice).